Here is a 1392-residue protein sequence, read N- to C-terminus: Protein dispatched homolog 3 (1392 aa).

Topologically, residues 1 to 73 (MDTEDDPLLQ…LGWAFTNPCC (73 aa)) are cytoplasmic. The tract at residues 16 to 40 (EEQEEEEATGETFLGAQKPGPQPGA) is disordered. The chain crosses the membrane as a helical span at residues 74–94 (AGLVLFLGCSIPMALSAFMFL). The Lumenal portion of the chain corresponds to 95-462 (YYPPLDIDIS…YEVRRTFNND (368 aa)). Residues 162–248 (GNRSRQASRA…HAAVAANQSR (87 aa)) form a disordered region. Asparagine 163 is a glycosylation site (N-linked (GlcNAc...) asparagine). A compositionally biased stretch (polar residues) spans 190-199 (SAAQKPTANR). Residues 457–615 (RTFNNDMLLA…LVTMPAALGL (159 aa)) form the SSD domain. The chain crosses the membrane as a helical span at residues 463–483 (MLLAFISSSCIAALVYILTSC). Position 484 (serine 484) is a topological domain, cytoplasmic. Residues 485-505 (VFLSFFGIASIGLSCLVALFL) form a helical membrane-spanning segment. Topologically, residues 506–508 (YHV) are lumenal. The chain crosses the membrane as a helical span at residues 509-529 (VFGIQYLGILNGVAAFVIVGI). At 530-573 (GVDDVFVFINTYRQATHLEDPQLRMIHTVQTAGKATFFTSLTTA) the chain is on the cytoplasmic side. A helical transmembrane segment spans residues 574–594 (AAYAANVFSQIPAVHDFGLFM). A topological domain (lumenal) is located at residue serine 595. A helical transmembrane segment spans residues 596 to 616 (LIVSCCWLAVLVTMPAALGLW). At 617–729 (SLYLAPLESS…WVLWSAVKSR (113 aa)) the chain is on the cytoplasmic side. A helical transmembrane segment spans residues 730–750 (WVIVGLFVSILILSLVFASRL). The Lumenal segment spans residues 751 to 1182 (RPASRAPLLF…IFMEIVGVQS (432 aa)). Residue asparagine 1021 is glycosylated (N-linked (GlcNAc...) asparagine). Residues 1183-1203 (ALCGLVLSLLICVAAVAVFTT) traverse the membrane as a helical segment. A topological domain (cytoplasmic) is located at residue histidine 1204. A helical transmembrane segment spans residues 1205–1225 (ILLLLPVLLSILGIVCLVVTI). The Lumenal portion of the chain corresponds to 1226–1291 (MYWSGWEMGA…TLEAVRHVGV (66 aa)). Residues 1292–1312 (AIVSSALTTVIATVPLFFCII) form a helical membrane-spanning segment. Over 1313-1320 (APFAKFGK) the chain is Cytoplasmic. Residues 1321-1341 (IVALNTGVSILYTLTVSTALL) traverse the membrane as a helical segment. Over 1342–1358 (GIMAPSSFTRTRTSFLK) the chain is Lumenal. The chain crosses the membrane as a helical span at residues 1359–1379 (ALGAVLLAGALGLGACLVLLQ). Over 1380 to 1392 (SGYKIPLPAGASL) the chain is Cytoplasmic.

This sequence belongs to the patched family. Expressed in brain and testis.

Its subcellular location is the endoplasmic reticulum membrane. It is found in the nucleus membrane. The protein resides in the cytoplasmic vesicle membrane. Plays a role in neuronal proliferation and differentiation. Plays a role in the accumulation of cellular cholesterol. Involved in intracellular lipid droplet formation. May contribute to cholesterol homeostasis in neuronal cells. This Homo sapiens (Human) protein is Protein dispatched homolog 3.